The following is a 137-amino-acid chain: MLQPKRTKFRKQQKGRNRGLAQSGNTVSFGDYGLKATTRGRLTARQIEAARRAINRHVKRGGKVWIRVFPDVPVTNKPLEVRQGKGKGNVEYWVAKVQPGTVLYEMEGVTEELAREAFRLAAAKLPVQTTFEYRKVM.

The segment covering 1–17 has biased composition (basic residues); sequence MLQPKRTKFRKQQKGRN. Residues 1–24 form a disordered region; it reads MLQPKRTKFRKQQKGRNRGLAQSG.

The protein belongs to the universal ribosomal protein uL16 family. In terms of assembly, part of the 50S ribosomal subunit.

In terms of biological role, binds 23S rRNA and is also seen to make contacts with the A and possibly P site tRNAs. In Dichelobacter nodosus (strain VCS1703A), this protein is Large ribosomal subunit protein uL16.